Consider the following 163-residue polypeptide: uncharacterized protein (163 aa).

The chain crosses the membrane as a helical span at residues 7 to 23 (TLVAFIATFFNLAATSI).

The protein resides in the membrane. This is an uncharacterized protein from Saccharomyces cerevisiae (strain ATCC 204508 / S288c) (Baker's yeast).